Consider the following 201-residue polypeptide: 3-isopropylmalate dehydratase small subunit (201 aa).

It belongs to the LeuD family. LeuD type 1 subfamily. As to quaternary structure, heterodimer of LeuC and LeuD.

The catalysed reaction is (2R,3S)-3-isopropylmalate = (2S)-2-isopropylmalate. It participates in amino-acid biosynthesis; L-leucine biosynthesis; L-leucine from 3-methyl-2-oxobutanoate: step 2/4. Catalyzes the isomerization between 2-isopropylmalate and 3-isopropylmalate, via the formation of 2-isopropylmaleate. The protein is 3-isopropylmalate dehydratase small subunit of Shewanella pealeana (strain ATCC 700345 / ANG-SQ1).